A 359-amino-acid polypeptide reads, in one-letter code: 4-galactosyl-N-acetylglucosaminide 3-alpha-L-fucosyltransferase 9 (359 aa).

Over 1 to 11 (MTSTSKGILRP) the chain is Cytoplasmic. The helical; Signal-anchor for type II membrane protein transmembrane segment at 12–32 (FLIVCVILACFMACLLIYIKP) threads the bilayer. The Lumenal segment spans residues 33 to 359 (TNSWVFSPME…VGNLEKWFWN (327 aa)). A glycan (N-linked (GlcNAc...) asparagine) is linked at Asn62. An acceptor-binding region spans residues 63–168 (ETTILVWVWP…RRDSDIQVPY (106 aa)). Gln75 is an a beta-D-galactosyl-(1-&gt;4)-N-acetyl-beta-D-glucosaminyl derivative binding site. 3 cysteine pairs are disulfide-bonded: Cys82-Cys335, Cys91-Cys338, and Cys190-Cys238. N-linked (GlcNAc...) asparagine glycosylation is present at Asn101. Glu137 contributes to the a beta-D-galactosyl-(1-&gt;4)-N-acetyl-beta-D-glucosaminyl derivative binding site. The active-site Nucleophile is Glu137. Position 137 (Glu137) interacts with GDP-beta-L-fucose. Residue Asn153 is glycosylated (N-linked (GlcNAc...) asparagine). Residues Tyr168, Val192, Ser194, Asn195, Arg202, Val226, Tyr241, Asn246, Tyr252, Glu255, and Lys256 each contribute to the GDP-beta-L-fucose site. Residues 169–326 (GFLTVSTNPF…NWRKDFTVNL (158 aa)) are donor-binding. Positions 327 to 359 (PRFWESHACLACDHVKRHQEYKSVGNLEKWFWN) are acceptor-binding.

Belongs to the glycosyltransferase 10 family. In terms of assembly, homodimer. N-glycosylated with complex-type N-glycans.

The protein resides in the golgi apparatus. It is found in the trans-Golgi network membrane. Its subcellular location is the golgi apparatus membrane. The enzyme catalyses a beta-D-galactosyl-(1-&gt;4)-N-acetyl-beta-D-glucosaminyl derivative + GDP-beta-L-fucose = a beta-D-galactosyl-(1-&gt;4)-[alpha-L-fucosyl-(1-&gt;3)]-N-acetyl-beta-D-glucosaminyl derivative + GDP + H(+). It catalyses the reaction an alpha-Neu5Ac-(2-&gt;3)-beta-D-Gal-(1-&gt;4)-beta-D-GlcNAc-(1-&gt;3)-beta-D-Gal-(1-&gt;4)-beta-D-GlcNAc derivative + GDP-beta-L-fucose = an alpha-Neu5Ac-(2-&gt;3)-beta-D-Gal-(1-&gt;4)-beta-D-GlcNAc-(1-&gt;3)-beta-D-Gal-(1-&gt;4)-[alpha-L-Fuc-(1-&gt;3)]-beta-D-GlcNAc derivative + GDP + H(+). The catalysed reaction is alpha-N-glycoloylneuraminosyl-(2-&gt;3)-beta-D-galactosyl-(1-&gt;4)-N-acetyl-beta-D-glucosaminyl-(1-&gt;3)-beta-D-galactosyl-(1-&gt;4)-N-acetyl-beta-D-glucosaminyl-(1-&gt;3)-beta-D-galactosyl-(1-&gt;4)-beta-D-glucosyl-(1&lt;-&gt;1')-ceramide + GDP-beta-L-fucose = alpha-N-glycoloylneuraminosyl-(2-&gt;3)-beta-D-galactosyl-(1-&gt;4)-N-acetyl-beta-D-glucosaminyl-(1-&gt;3)-beta-D-galactosyl-(1-&gt;4)-[alpha-L-fucosyl-(1-&gt;3)]-N-acetyl-beta-D-glucosaminyl-(1-&gt;3)-beta-D-galactosyl-(1-&gt;4)-beta-D-glucosyl-(1&lt;-&gt;1')-ceramide + GDP + H(+). It carries out the reaction alpha-D-galactosyl-(1-&gt;3)-beta-D-galactosyl-(1-&gt;4)-N-acetyl-beta-D-glucosaminyl-(1-&gt;3)-beta-D-galactosyl-(1-&gt;4)-beta-D-glucosyl-(1&lt;-&gt;1')-ceramide + GDP-beta-L-fucose = a neolactoside IV(3)-alpha-Gal,III(3)-alpha-Fuc-nLc4Cer + GDP + H(+). The enzyme catalyses a neolactoside nLc4Cer + GDP-beta-L-fucose = a neolactoside III(3)-alpha-Fuc-nLc4Cer + GDP + H(+). It catalyses the reaction an N-acetyl-alpha-neuraminyl-(2-&gt;3)-beta-D-galactosyl-(1-&gt;4)-N-acetyl-beta-D-glucosaminyl derivative + GDP-beta-L-fucose = an alpha-Neu5Ac-(2-&gt;3)-beta-D-Gal-(1-&gt;4)-[alpha-L-Fuc-(1-&gt;3)]-beta-D-GlcNAc derivative + GDP + H(+). The catalysed reaction is beta-D-Gal-(1-&gt;4)-beta-D-GlcNAc-(1-&gt;3)-beta-D-Gal-(1-&gt;4)-D-Glc + GDP-beta-L-fucose = beta-D-Gal-(1-&gt;4)-[alpha-L-Fuc-(1-&gt;3)]-beta-D-GlcNAc-(1-&gt;3)-beta-D-Gal-(1-&gt;4)-D-Glc + GDP + H(+). It carries out the reaction an alpha-L-Fuc-(1-&gt;2)-beta-D-Gal-(1-&gt;4)-beta-D-GlcNAc derivative + GDP-beta-L-fucose = an alpha-L-Fuc-(1-&gt;2)-beta-D-Gal-(1-&gt;4)-[alpha-L-Fuc-(1-&gt;3)]-beta-D-GlcNAc derivative + GDP + H(+). It functions in the pathway protein modification; protein glycosylation. The protein operates within glycolipid biosynthesis. Its activity is regulated as follows. Activated by Mn2+. Functionally, catalyzes alpha(1-&gt;3) linkage of fucosyl moiety transferred from GDP-beta-L-fucose to N-acetyl glucosamine (GlcNAc) within type 2 lactosamine (LacNAc, beta-D-Gal-(1-&gt;4)-beta-D-GlcNAc-) glycan attached to glycolipids and N- or O-linked glycoproteins. Fucosylates distal type 2 LacNAc and its fucosylated (H-type 2 LacNAc) and sialylated (sialyl-type 2 LacNAc) derivatives to form Lewis x (Lex) (CD15) and Lewis y (Ley) antigenic epitopes involved in cell adhesion and differentiation. Generates Lex epitopes in the brain, presumably playing a role in the maintenance of neuronal stemness and neurite outgrowth in progenitor neural cells. Fucosylates the internal type 2 LacNAc unit of the polylactosamine chain to form VIM-2 antigen that serves as recognition epitope for SELE. Can also modify milk oligosaccharides in particular type 2 tetrasaccharide LNnT. The protein is 4-galactosyl-N-acetylglucosaminide 3-alpha-L-fucosyltransferase 9 of Cricetulus griseus (Chinese hamster).